We begin with the raw amino-acid sequence, 818 residues long: Serine/threonine-protein phosphatase 4 regulatory subunit 3 (818 aa).

The region spanning 1 to 100 (MTDTRRRVKV…DEIWEKICQV (100 aa)) is the WH1 domain. The segment at 718 to 818 (LAKSSFSGRQ…PPSKKSRLSS (101 aa)) is disordered. Polar residues predominate over residues 721 to 730 (SSFSGRQNPS). The span at 736-756 (SGSTKTSLSSPPPSASLSPGS) shows a compositional bias: low complexity. Over residues 788–804 (YPDDDEEEEDDDDEESK) the composition is skewed to acidic residues.

It belongs to the SMEK family. Serine/threonine-protein phosphatase 4 (PP4) occurs in different assemblies of the catalytic and one or more regulatory subunits.

Regulatory subunit of serine/threonine-protein phosphatase 4. The sequence is that of Serine/threonine-protein phosphatase 4 regulatory subunit 3 (smek1) from Tetraodon nigroviridis (Spotted green pufferfish).